A 722-amino-acid chain; its full sequence is Probable cation-transporting ATPase HI_0290 (722 aa).

The region spanning 9–75 (KKISIQIGGM…IIHKTGFSAH (67 aa)) is the HMA domain. 2 residues coordinate a metal cation: cysteine 20 and cysteine 23. A run of 6 helical transmembrane segments spans residues 94 to 114 (LIVLWIINIPFLIGMLGMIGG), 118 to 138 (LMLPPIWQFALASIVQLWLAI), 157 to 177 (VLVSTGTLTIYLYSAFMLFYH), 180 to 200 (HAMGHVYFEASVMVIGFVSLG), 340 to 360 (VFVPVVLVISLVTFALTYILT), and 373 to 393 (VLVIACPCALGLATPAAIMVG). Residue aspartate 422 is the 4-aspartylphosphate intermediate of the active site. The next 4 helical transmembrane spans lie at 523-543 (IWQIASIVAVSINDEPIGAFA), 608-628 (LGHIVAMVGDGINDAPALASA), 675-695 (LFFALIYNILGIPLAAFGFLS), and 697-717 (IIAGAAMALSSISVLMNALRL). Residues aspartate 617 and aspartate 621 each contribute to the Mg(2+) site.

It belongs to the cation transport ATPase (P-type) (TC 3.A.3) family. Type IB subfamily.

The protein localises to the cell membrane. It carries out the reaction ATP + H2O = ADP + phosphate + H(+). The chain is Probable cation-transporting ATPase HI_0290 from Haemophilus influenzae (strain ATCC 51907 / DSM 11121 / KW20 / Rd).